The sequence spans 209 residues: NAD(P)H dehydrogenase (quinone) (209 aa).

The Flavodoxin-like domain maps to 4–199; the sequence is VNIIFHSVHA…EMARYQGRHV (196 aa). FMN contacts are provided by residues 10–15 and 87–89; these read SVHAHI and TRY. Trp-107 is a substrate binding site. Residues 122–128 and His-143 each bind FMN; that span reads SSGTQHG.

This sequence belongs to the WrbA family. FMN serves as cofactor.

The enzyme catalyses a quinone + NADH + H(+) = a quinol + NAD(+). The catalysed reaction is a quinone + NADPH + H(+) = a quinol + NADP(+). The chain is NAD(P)H dehydrogenase (quinone) from Methanosarcina mazei (strain ATCC BAA-159 / DSM 3647 / Goe1 / Go1 / JCM 11833 / OCM 88) (Methanosarcina frisia).